We begin with the raw amino-acid sequence, 116 residues long: Putative superoxide reductase (116 aa).

Fe cation is bound by residues His-20, His-46, His-52, Cys-101, and His-104.

It belongs to the desulfoferrodoxin family. It depends on Fe cation as a cofactor.

The enzyme catalyses reduced [rubredoxin] + superoxide + 2 H(+) = oxidized [rubredoxin] + H2O2. Uses electrons from reduced NADP, by way of rubredoxin and an oxidoreductase, to catalyze the reduction of superoxide to hydrogen peroxide. The protein is Putative superoxide reductase of Methanocaldococcus jannaschii (strain ATCC 43067 / DSM 2661 / JAL-1 / JCM 10045 / NBRC 100440) (Methanococcus jannaschii).